The chain runs to 100 residues: Urease subunit gamma (100 aa).

This sequence belongs to the urease gamma subunit family. Heterotrimer of UreA (gamma), UreB (beta) and UreC (alpha) subunits. Three heterotrimers associate to form the active enzyme.

The protein resides in the cytoplasm. The catalysed reaction is urea + 2 H2O + H(+) = hydrogencarbonate + 2 NH4(+). Its pathway is nitrogen metabolism; urea degradation; CO(2) and NH(3) from urea (urease route): step 1/1. This Photorhabdus laumondii subsp. laumondii (strain DSM 15139 / CIP 105565 / TT01) (Photorhabdus luminescens subsp. laumondii) protein is Urease subunit gamma.